Consider the following 143-residue polypeptide: MIRKSKKITKKRGSRTCGYGEAKKHRGAGHRGGRGNAGHQKHKWLSVCKFNPDYFGKYGFNRNPCLIKQLETINIGELEEYILKYKDAFQVEEGKVVVNATEIGFEKVLGKGRISTAMVVKAVEFSEGAKEKIEAAGGEFVEL.

2 stretches are compositionally biased toward basic residues: residues 1-14 (MIRKSKKITKKRGS) and 23-38 (KKHRGAGHRGGRGNAG). The segment at 1–38 (MIRKSKKITKKRGSRTCGYGEAKKHRGAGHRGGRGNAG) is disordered.

Belongs to the universal ribosomal protein uL15 family. In terms of assembly, part of the 50S ribosomal subunit.

Functionally, binds to the 23S rRNA. The protein is Large ribosomal subunit protein uL15 of Methanococcus maripaludis (strain DSM 14266 / JCM 13030 / NBRC 101832 / S2 / LL).